Consider the following 545-residue polypeptide: EH domain-containing protein 1 (545 aa).

2 consecutive EF-hand domains span residues 14 to 49 and 50 to 83; these read ENQM…SNLP and RPEL…VSLA. The 79-residue stretch at 15–93 folds into the EH domain; that stretch reads NQMIYKEWFE…QTGHEISHEV (79 aa). Residues Asp27, Asp29, Asp31, Arg33, Asp38, Asp61, Tyr67, and Glu72 each contribute to the Ca(2+) site. The Dynamin-type G domain occupies 194–429; that stretch reads FDAKPMVMLL…DLLADLKDIP (236 aa). The tract at residues 204-211 is G1 motif; sequence GQYSTGKT. A GTP-binding site is contributed by 204–211; sequence GQYSTGKT. Positions 230–231 are G2 motif; sequence EP. Residues 292–295 form a G3 motif region; it reads DTPG. GTP-binding positions include 309–313 and Lys359; that span reads DFTGV. A G4 motif region spans residues 358-361; the sequence is NKAD. A region of interest (G5 motif) is located at residue Val382. 395–398 is a GTP binding site; the sequence is SFSD. The stretch at 467-490 forms a coiled coil; that stretch reads KAKAQQKLIDNLEDEFGKVQREHH.

The protein belongs to the TRAFAC class dynamin-like GTPase superfamily. Dynamin/Fzo/YdjA family. EHD subfamily. In terms of assembly, homooligomer, and heterooligomer with EHD2.

The protein resides in the endosome membrane. The protein localises to the cell membrane. Its subcellular location is the cytoplasm. It carries out the reaction GTP + H2O = GDP + phosphate + H(+). In terms of biological role, involved in endocytosis positive regulation. Acts in early endocytic membrane fusion and membrane trafficking of recycling endosomes. Confers salt tolerance. The sequence is that of EH domain-containing protein 1 from Arabidopsis thaliana (Mouse-ear cress).